Reading from the N-terminus, the 141-residue chain is Small ribosomal subunit protein bS6 (141 aa).

The tract at residues 110–141 is disordered; sequence SRTKVSDQPAAVEAAEAPAAPAAQEESAPASA. The segment covering 117–141 has biased composition (low complexity); that stretch reads QPAAVEAAEAPAAPAAQEESAPASA.

Belongs to the bacterial ribosomal protein bS6 family.

Binds together with bS18 to 16S ribosomal RNA. The sequence is that of Small ribosomal subunit protein bS6 from Acidobacterium capsulatum (strain ATCC 51196 / DSM 11244 / BCRC 80197 / JCM 7670 / NBRC 15755 / NCIMB 13165 / 161).